The chain runs to 74 residues: DNA-directed RNA polymerase subunit omega (74 aa).

It belongs to the RNA polymerase subunit omega family. In terms of assembly, the RNAP catalytic core consists of 2 alpha, 1 beta, 1 beta' and 1 omega subunit. When a sigma factor is associated with the core the holoenzyme is formed, which can initiate transcription.

It catalyses the reaction RNA(n) + a ribonucleoside 5'-triphosphate = RNA(n+1) + diphosphate. Promotes RNA polymerase assembly. Latches the N- and C-terminal regions of the beta' subunit thereby facilitating its interaction with the beta and alpha subunits. The chain is DNA-directed RNA polymerase subunit omega from Lactobacillus acidophilus (strain ATCC 700396 / NCK56 / N2 / NCFM).